A 584-amino-acid chain; its full sequence is Beta-fructofuranosidase, insoluble isoenzyme CWINV1 (584 aa).

An N-terminal signal peptide occupies residues M1–A28. Substrate contacts are provided by residues W63–D66, Q82, W90, and W125–S126. The active site involves D66. 2 N-linked (GlcNAc...) asparagine glycosylation sites follow: N159 and N186. Residues R191–D192, E246, and D282 each bind substrate. N-linked (GlcNAc...) asparagine glycosylation is found at N342 and N446. C442 and C491 form a disulfide bridge.

It belongs to the glycosyl hydrolase 32 family. As to expression, expressed in seedlings, leaves, flowers, and seeds.

The protein resides in the secreted. It localises to the extracellular space. The protein localises to the apoplast. Its subcellular location is the cell wall. The catalysed reaction is Hydrolysis of terminal non-reducing beta-D-fructofuranoside residues in beta-D-fructofuranosides.. In terms of biological role, beta-fructofuranosidase that can use sucrose and 1-kestose, and, to a lower extent, neokestose and levan, as substrates, but not inuline. The polypeptide is Beta-fructofuranosidase, insoluble isoenzyme CWINV1 (CWINV1) (Arabidopsis thaliana (Mouse-ear cress)).